We begin with the raw amino-acid sequence, 383 residues long: 3-dehydroquinate synthase (383 aa).

Residues 81–86 (EGEVSK), 115–119 (GVVGD), 139–140 (TS), Lys-152, and Lys-161 contribute to the NAD(+) site. Zn(2+) is bound by residues Glu-194, His-256, and His-274.

It belongs to the sugar phosphate cyclases superfamily. Dehydroquinate synthase family. Requires Co(2+) as cofactor. Zn(2+) serves as cofactor. The cofactor is NAD(+).

It is found in the cytoplasm. The enzyme catalyses 7-phospho-2-dehydro-3-deoxy-D-arabino-heptonate = 3-dehydroquinate + phosphate. Its pathway is metabolic intermediate biosynthesis; chorismate biosynthesis; chorismate from D-erythrose 4-phosphate and phosphoenolpyruvate: step 2/7. Catalyzes the conversion of 3-deoxy-D-arabino-heptulosonate 7-phosphate (DAHP) to dehydroquinate (DHQ). This chain is 3-dehydroquinate synthase, found in Nitrobacter winogradskyi (strain ATCC 25391 / DSM 10237 / CIP 104748 / NCIMB 11846 / Nb-255).